The primary structure comprises 240 residues: Pyridoxine 5'-phosphate synthase (240 aa).

A 3-amino-2-oxopropyl phosphate-binding site is contributed by asparagine 7. 9 to 10 contacts 1-deoxy-D-xylulose 5-phosphate; it reads DH. Arginine 18 serves as a coordination point for 3-amino-2-oxopropyl phosphate. Histidine 43 serves as the catalytic Proton acceptor. 1-deoxy-D-xylulose 5-phosphate is bound by residues arginine 45 and histidine 50. Residue glutamate 70 is the Proton acceptor of the active site. Threonine 100 lines the 1-deoxy-D-xylulose 5-phosphate pocket. The active-site Proton donor is the histidine 191. 3-amino-2-oxopropyl phosphate contacts are provided by residues glycine 192 and 213–214; that span reads GH.

It belongs to the PNP synthase family. In terms of assembly, homooctamer; tetramer of dimers.

It is found in the cytoplasm. It carries out the reaction 3-amino-2-oxopropyl phosphate + 1-deoxy-D-xylulose 5-phosphate = pyridoxine 5'-phosphate + phosphate + 2 H2O + H(+). It participates in cofactor biosynthesis; pyridoxine 5'-phosphate biosynthesis; pyridoxine 5'-phosphate from D-erythrose 4-phosphate: step 5/5. Catalyzes the complicated ring closure reaction between the two acyclic compounds 1-deoxy-D-xylulose-5-phosphate (DXP) and 3-amino-2-oxopropyl phosphate (1-amino-acetone-3-phosphate or AAP) to form pyridoxine 5'-phosphate (PNP) and inorganic phosphate. The chain is Pyridoxine 5'-phosphate synthase from Acaryochloris marina (strain MBIC 11017).